The primary structure comprises 511 residues: Maturase K (511 aa).

This sequence belongs to the intron maturase 2 family. MatK subfamily.

The protein resides in the plastid. It is found in the chloroplast. Usually encoded in the trnK tRNA gene intron. Probably assists in splicing its own and other chloroplast group II introns. The protein is Maturase K of Triticum aestivum (Wheat).